The following is a 94-amino-acid chain: Evasin P1172 (94 aa).

3 disulfides stabilise this stretch: C35/C54, C39/C56, and C50/C67. N-linked (GlcNAc...) asparagine glycosylation is found at N38, N44, N53, and N80.

The protein localises to the secreted. In terms of biological role, salivary chemokine-binding protein which binds to host chemokines CXCL1, CXCL2, CXCL5 and CXCL8. In Ixodes ricinus (Common tick), this protein is Evasin P1172.